We begin with the raw amino-acid sequence, 1165 residues long: Chromosome partition protein Smc (1165 aa).

32 to 39 lines the ATP pocket; the sequence is PNGSGKSN. Residues 161–503 are a coiled coil; it reads AGVAEFDRKI…ETQRQVWREA (343 aa). An SMC hinge domain is found at 518 to 630; it reads QGVHGLISQL…VFRSLELARR (113 aa). Coiled coils occupy residues 672 to 901 and 946 to 1010; these read ELAE…LQQR and DLSL…DCDT.

It belongs to the SMC family. Homodimer.

The protein resides in the cytoplasm. Its function is as follows. Required for chromosome condensation and partitioning. The chain is Chromosome partition protein Smc from Gloeobacter violaceus (strain ATCC 29082 / PCC 7421).